The following is a 175-amino-acid chain: CASP-like protein 2C1 (175 aa).

Residues 1–7 are Cytoplasmic-facing; the sequence is MVRLRET. A helical membrane pass occupies residues 8–28; it reads EVILRLCIVFFILLSSCLIGL. Topologically, residues 29–51 are extracellular; it reads DSQTKEIAYIHKKVSFRYLLALE. Residues 52–72 form a helical membrane-spanning segment; the sequence is AELYINVVVAAYNLVQIGLGW. Topologically, residues 73–91 are cytoplasmic; sequence YNVEQKTSNPKWFSYLLDQ. A helical membrane pass occupies residues 92–112; that stretch reads TAAYVVFAGTSAAAQHSLLVV. Residues 113–136 lie on the Extracellular side of the membrane; that stretch reads TGSRELQWMKWCYKFTRFCFQMGS. Residues 137–157 traverse the membrane as a helical segment; the sequence is AIILNYIAAALMVLLSSISAF. The Cytoplasmic portion of the chain corresponds to 158–175; the sequence is NLFRLYSPKRFFSFKSSS.

This sequence belongs to the Casparian strip membrane proteins (CASP) family. As to quaternary structure, homodimer and heterodimers.

The protein localises to the cell membrane. This is CASP-like protein 2C1 from Arabidopsis lyrata subsp. lyrata (Lyre-leaved rock-cress).